The sequence spans 203 residues: Twist-related protein 1 (203 aa).

Positions 1 to 18 are enriched in low complexity; that stretch reads MMQDVSSSPVSPADDSLS. Residues 1–106 are disordered; sequence MMQDVSSSPV…GGGSPQSYEE (106 aa). Residues 34–43 show a composition bias toward basic residues; it reads RGGRKRRSSR. Gly residues-rich tracts occupy residues 46-65 and 80-100; these read AGGG…GGDE and GCGG…GGGS. Residues 109 to 160 form the bHLH domain; sequence TQRVMANVRERQRTQSLNEAFAALRKIIPTLPSDKLSKIQTLKLAARYIDFL. Residues 162–192 are sufficient for transactivation activity; it reads QVLQSDELDSKMASCSYVAHERLSYAFSVWR.

Efficient DNA binding requires dimerization with another bHLH protein. Homodimer or heterodimer with E proteins such as TCF3. ID1 binds preferentially to TCF3 but does not interact efficiently with TWIST1 so ID1 levels control the amount of TCF3 available to dimerize with TWIST and thus determine the type of dimer formed.

It localises to the nucleus. Functionally, acts as a transcriptional regulator. Inhibits myogenesis by sequestrating E proteins, inhibiting trans-activation by MEF2, and inhibiting DNA-binding by MYOD1 through physical interaction. This interaction probably involves the basic domains of both proteins. Also represses expression of pro-inflammatory cytokines such as TNFA and IL1B. Regulates cranial suture patterning and fusion. Activates transcription as a heterodimer with E proteins. Regulates gene expression differentially, depending on dimer composition. Homodimers induce expression of FGFR2 and POSTN while heterodimers repress FGFR2 and POSTN expression and induce THBS1 expression. Heterodimerization is also required for osteoblast differentiation. Represses the activity of the circadian transcriptional activator: NPAS2-BMAL1 heterodimer. This is Twist-related protein 1 (TWIST1) from Saguinus oedipus (Cotton-top tamarin).